A 365-amino-acid polypeptide reads, in one-letter code: Serpentine receptor class epsilon-38 (365 aa).

Transmembrane regions (helical) follow at residues 26 to 46, 65 to 85, 124 to 144, 168 to 188, 196 to 216, 256 to 276, and 285 to 305; these read GMYL…GVII, IMTA…LLII, ALVI…FGIL, IPVF…YFVL, LGTS…LAVW, LVIV…CLVI, and IFIH…CSTL.

Belongs to the nematode receptor-like protein sre family.

It is found in the membrane. The chain is Serpentine receptor class epsilon-38 (sre-38) from Caenorhabditis elegans.